We begin with the raw amino-acid sequence, 357 residues long: Geranylgeranyl pyrophosphate synthase spyE (357 aa).

A disordered region spans residues 36 to 60; that stretch reads EAQSQAVPGTRTETEPTGSSPSDLQ. Over residues 50 to 59 the composition is skewed to polar residues; that stretch reads EPTGSSPSDL. Isopentenyl diphosphate contacts are provided by Lys-84, Arg-87, and His-116. Positions 123 and 127 each coordinate Mg(2+). Residue Arg-132 participates in dimethylallyl diphosphate binding. Arg-133 contributes to the isopentenyl diphosphate binding site. The dimethylallyl diphosphate site is built by Lys-210, Thr-211, and Gln-244. Mg(2+) is bound at residue Asp-247. 3 residues coordinate dimethylallyl diphosphate: Asn-251, Lys-261, and Lys-271.

The protein belongs to the FPP/GGPP synthase family. Requires Mg(2+) as cofactor.

The enzyme catalyses isopentenyl diphosphate + dimethylallyl diphosphate = (2E)-geranyl diphosphate + diphosphate. The catalysed reaction is isopentenyl diphosphate + (2E)-geranyl diphosphate = (2E,6E)-farnesyl diphosphate + diphosphate. It carries out the reaction isopentenyl diphosphate + (2E,6E)-farnesyl diphosphate = (2E,6E,10E)-geranylgeranyl diphosphate + diphosphate. It functions in the pathway secondary metabolite biosynthesis; terpenoid biosynthesis. Functionally, geranylgeranyl pyrophosphate synthase; part of the gene cluster that mediates the biosynthesis of meroterpenoids called sartorypyrones. Within the pathway, spyE provides the spyF cosubstrate geranylgeranyl pyrophosphate (GGPP) for the prenylation of triacetic acid lactone (TAL). The biosynthesis of sartorypyrones begins with the production of triacetic acid lactone (TAL) by the NR-PKS spyA using one molecule of acetyl-CoA and two molecules of malonyl-CoA. The prenyltransferase spyF then conjugates geranylgeranyl pyrophosphate (GGPP) to TAL to form geranylgeranyl-triacetate lactone, for which the pathway-specific geranylgeranyl pyrophosphate synthase (GGPS) spyE is required to provide GGPP. Subsequently, geranylgeranyl-triacetate lactone is epoxidized at the terminal olein by the FAD-dependent monooxygenase spyC, followed by cyclization of the terpenoid component catalyzed by the terpene cyclase spyD to produce both the bicyclic sartorypyrone F and the monocyclic sartorypyrone D. Finally, the last step of the biosynthesis involves the acetylation of the meroterpenoids sartorypyrones D and F by the acetyltransferase SpyB to produce sartorypyrones A and G, respectively. The polypeptide is Geranylgeranyl pyrophosphate synthase spyE (Aspergillus fumigatus (strain ATCC MYA-4609 / CBS 101355 / FGSC A1100 / Af293) (Neosartorya fumigata)).